Reading from the N-terminus, the 155-residue chain is Aspartate carbamoyltransferase regulatory chain (155 aa).

4 residues coordinate Zn(2+): Cys-110, Cys-115, Cys-139, and Cys-142.

It belongs to the PyrI family. As to quaternary structure, contains catalytic and regulatory chains. Zn(2+) is required as a cofactor.

In terms of biological role, involved in allosteric regulation of aspartate carbamoyltransferase. The chain is Aspartate carbamoyltransferase regulatory chain from Yersinia pseudotuberculosis serotype IB (strain PB1/+).